A 301-amino-acid polypeptide reads, in one-letter code: Homoserine O-acetyltransferase (301 aa).

The Acyl-thioester intermediate role is filled by cysteine 142. Residues lysine 163 and serine 192 each coordinate substrate. Catalysis depends on histidine 235, which acts as the Proton acceptor. Glutamate 237 is a catalytic residue. Residue arginine 249 coordinates substrate.

It belongs to the MetA family.

Its subcellular location is the cytoplasm. The catalysed reaction is L-homoserine + acetyl-CoA = O-acetyl-L-homoserine + CoA. The protein operates within amino-acid biosynthesis; L-methionine biosynthesis via de novo pathway; O-acetyl-L-homoserine from L-homoserine: step 1/1. Its function is as follows. Transfers an acetyl group from acetyl-CoA to L-homoserine, forming acetyl-L-homoserine. The chain is Homoserine O-acetyltransferase from Bacillus cereus (strain 03BB102).